A 147-amino-acid chain; its full sequence is D-aminoacyl-tRNA deacylase (147 aa).

The short motif at 136 to 137 (GP) is the Gly-cisPro motif, important for rejection of L-amino acids element.

It belongs to the DTD family. Homodimer.

The protein resides in the cytoplasm. The enzyme catalyses glycyl-tRNA(Ala) + H2O = tRNA(Ala) + glycine + H(+). The catalysed reaction is a D-aminoacyl-tRNA + H2O = a tRNA + a D-alpha-amino acid + H(+). Functionally, an aminoacyl-tRNA editing enzyme that deacylates mischarged D-aminoacyl-tRNAs. Also deacylates mischarged glycyl-tRNA(Ala), protecting cells against glycine mischarging by AlaRS. Acts via tRNA-based rather than protein-based catalysis; rejects L-amino acids rather than detecting D-amino acids in the active site. By recycling D-aminoacyl-tRNA to D-amino acids and free tRNA molecules, this enzyme counteracts the toxicity associated with the formation of D-aminoacyl-tRNA entities in vivo and helps enforce protein L-homochirality. This Streptococcus equi subsp. zooepidemicus (strain MGCS10565) protein is D-aminoacyl-tRNA deacylase.